Reading from the N-terminus, the 117-residue chain is MSNIIKALEEEQMKSGLPKFAPGDTVVVQVKVKEGDRERLQAFEGVVIAIRNRGLHSAFTVRKISNGEGVERTFQTHSPIVDSIEVKRRGAVRRAKLYYLRERSGKSARIKEKLAKK.

This sequence belongs to the bacterial ribosomal protein bL19 family.

This protein is located at the 30S-50S ribosomal subunit interface and may play a role in the structure and function of the aminoacyl-tRNA binding site. This chain is Large ribosomal subunit protein bL19, found in Vibrio parahaemolyticus serotype O3:K6 (strain RIMD 2210633).